Reading from the N-terminus, the 167-residue chain is Fimbrial adapter PapF (167 aa).

The N-terminal stretch at methionine 1–leucine 18 is a signal peptide.

The protein resides in the secreted. It is found in the fimbrium. In terms of biological role, adapter that links the PapG adhesin to the distal end of the tip fibrillum. PapF is required for the correct presentation of the adhesin at the distal end of the tip fibrillum. Pili are polar filaments radiating from the surface of the bacterium to a length of 0.5-1.5 micrometers and numbering 100-300 per cell, and enable bacteria to colonize the epithelium of specific host organs. The protein is Fimbrial adapter PapF (papF) of Escherichia coli.